The chain runs to 362 residues: S-adenosylmethionine-dependent nucleotide dehydratase RSAD2 (362 aa).

A disordered region spans residues glutamate 47 to proline 73. A compositionally biased stretch (polar residues) spans aspartate 64 to proline 73. The 221-residue stretch at proline 70–leucine 290 folds into the Radical SAM core domain. Cysteine 84, cysteine 88, and cysteine 91 together coordinate [4Fe-4S] cluster. Lysine 198 bears the N6-acetyllysine mark. Lysine 207 participates in a covalent cross-link: Glycyl lysine isopeptide (Lys-Gly) (interchain with G-Cter in ubiquitin).

It belongs to the radical SAM superfamily. RSAD2 family. In terms of assembly, homodimer. Interacts with IRAK1 and TRAF6. Interacts with FPPS. Interacts with HADHB. Interacts (via C-terminus) with VAPA/VAP33 (via C-terminus). It depends on [4Fe-4S] cluster as a cofactor. In terms of processing, acetylated by HAT1. HAT1-mediated acetylation of Lys-198 in turn recruits UBE4A that stimulates RSAD2 polyubiquitination leading to proteasomal degradation. 'Lys-6'-linked polyubiquitination at Lys-207 leads to RSAD2 protein degradation. In terms of tissue distribution, expressed at higher levels in atherosclerotic arteries than in normal arteries.

Its subcellular location is the endoplasmic reticulum membrane. The protein resides in the golgi apparatus. It localises to the endoplasmic reticulum. It is found in the lipid droplet. The protein localises to the mitochondrion. Its subcellular location is the mitochondrion inner membrane. The protein resides in the mitochondrion outer membrane. It carries out the reaction CTP + AH2 + S-adenosyl-L-methionine = 3'-deoxy-3',4'-didehydro-CTP + 5'-deoxyadenosine + L-methionine + A + H2O + H(+). IRAK1 and TRAF6 synergistically activate RSAD2 increasing its activity with CTP as substrate about 10-fold. Functionally, interferon-inducible antiviral protein which plays a major role in the cell antiviral state induced by type I and type II interferon. Catalyzes the conversion of cytidine triphosphate (CTP) to 3'-deoxy-3',4'-didehydro-CTP (ddhCTP) via a SAM-dependent radical mechanism. In turn, ddhCTP acts as a chain terminator for the RNA-dependent RNA polymerases from multiple viruses and directly inhibits viral replication. Therefore, inhibits a wide range of DNA and RNA viruses. Also promotes TLR7 and TLR9-dependent production of IFN-beta production in plasmacytoid dendritic cells (pDCs) by facilitating 'Lys-63'-linked ubiquitination of IRAK1 by TRAF6. Plays a role in CD4+ T-cells activation and differentiation. Facilitates T-cell receptor (TCR)-mediated GATA3 activation and optimal T-helper 2 (Th2) cytokine production by modulating NFKB1 and JUNB activities. Can inhibit secretion of soluble proteins. In Mus musculus (Mouse), this protein is S-adenosylmethionine-dependent nucleotide dehydratase RSAD2.